The chain runs to 177 residues: Large ribosomal subunit protein uL30 (177 aa).

Belongs to the universal ribosomal protein uL30 family. In terms of assembly, part of the 50S ribosomal subunit.

The chain is Large ribosomal subunit protein uL30 from Pyrobaculum islandicum (strain DSM 4184 / JCM 9189 / GEO3).